Consider the following 278-residue polypeptide: Putative pyruvate, phosphate dikinase regulatory protein (278 aa).

149 to 156 serves as a coordination point for ADP; it reads GVSRSSKT.

Belongs to the pyruvate, phosphate/water dikinase regulatory protein family. PDRP subfamily.

The enzyme catalyses N(tele)-phospho-L-histidyl/L-threonyl-[pyruvate, phosphate dikinase] + ADP = N(tele)-phospho-L-histidyl/O-phospho-L-threonyl-[pyruvate, phosphate dikinase] + AMP + H(+). It catalyses the reaction N(tele)-phospho-L-histidyl/O-phospho-L-threonyl-[pyruvate, phosphate dikinase] + phosphate + H(+) = N(tele)-phospho-L-histidyl/L-threonyl-[pyruvate, phosphate dikinase] + diphosphate. Its function is as follows. Bifunctional serine/threonine kinase and phosphorylase involved in the regulation of the pyruvate, phosphate dikinase (PPDK) by catalyzing its phosphorylation/dephosphorylation. The chain is Putative pyruvate, phosphate dikinase regulatory protein from Erythrobacter litoralis (strain HTCC2594).